The chain runs to 423 residues: 5-hydroxytryptamine receptor 1A (423 aa).

Topologically, residues 1–38 (MEGLSPRQGNNTTSSEGPFGTLGNATGISDVTFSYQVI) are extracellular. N-linked (GlcNAc...) asparagine glycosylation is found at Asn-10, Asn-11, and Asn-24. A helical membrane pass occupies residues 39–59 (TSLLLGTLIFCAVLGNACVVA). The Cytoplasmic portion of the chain corresponds to 60 to 73 (AIALERSLQNVANY). The chain crosses the membrane as a helical span at residues 74–98 (LIGSLAVTDLMVSVLVLPMAALYQV). Over 99 to 107 (LNKWTLGQV) the chain is Extracellular. Residues 108–132 (TCDLFIALDVLCCTSSILHLCAIAL) traverse the membrane as a helical segment. Cys-109 and Cys-187 are oxidised to a cystine. The serotonin site is built by Asp-116 and Cys-120. Positions 133–135 (DRY) match the DRY motif; important for ligand-induced conformation changes motif. Residues 133–152 (DRYWAITDPIDYVNKRTPRR) lie on the Cytoplasmic side of the membrane. Residues 153–174 (AAALISLTWLIGFLISIPPMLG) traverse the membrane as a helical segment. Residues 175 to 193 (WRTPEDRSDPDACTISKDH) are Extracellular-facing. The helical transmembrane segment at 194 to 216 (GYTIYSTFGAFYIPLLLMLVLYG) threads the bilayer. Topologically, residues 217–346 (RIFRAARFRI…LARERKTVKT (130 aa)) are cytoplasmic. Residues 235–277 (RKGADARSGVSPAPQPRKSVNGEPGGREWRQGPGSQAGGPLCT) are disordered. Lys-345, Thr-346, and Gly-352 together coordinate 1D-myo-inositol 4-phosphate. A helical membrane pass occupies residues 347–370 (LGIIMGTFILCWLPFFIVALVLPF). Residues 371–378 (CESSCHMP) lie on the Extracellular side of the membrane. The chain crosses the membrane as a helical span at residues 379 to 403 (TLLGAIINWLGYSNSLLNPVIYAYF). An NPxxY motif; important for ligand-induced conformation changes and signaling motif is present at residues 396–400 (NPVIY). Positions 403, 404, and 405 each coordinate 1D-myo-inositol 4-phosphate. Over 404–423 (NKDFQNAFKKIVRCKFCRRR) the chain is Cytoplasmic.

It belongs to the G-protein coupled receptor 1 family. 5-hydroxytryptamine receptor subfamily. HTR1A sub-subfamily. In terms of assembly, heterodimer; heterodimerizes with GPER1. Interacts with YIF1B. Interacts with GPR39 and GALR1.

Its subcellular location is the cell membrane. It is found in the cell projection. The protein resides in the dendrite. With respect to regulation, G-protein coupled receptor activity is regulated by lipids: phosphatidylinositol 4-phosphate increases HTR1A-mediated activity. Functionally, G-protein coupled receptor for 5-hydroxytryptamine (serotonin). Also functions as a receptor for various drugs and psychoactive substances. Ligand binding causes a conformation change that triggers signaling via guanine nucleotide-binding proteins (G proteins) and modulates the activity of downstream effectors, such as adenylate cyclase. HTR1A is coupled to G(i)/G(o) G alpha proteins and mediates inhibitory neurotransmission: signaling inhibits adenylate cyclase activity and activates a phosphatidylinositol-calcium second messenger system that regulates the release of Ca(2+) ions from intracellular stores. Beta-arrestin family members regulate signaling by mediating both receptor desensitization and resensitization processes. In Canis lupus familiaris (Dog), this protein is 5-hydroxytryptamine receptor 1A (HTR1A).